The chain runs to 360 residues: Phenylalanine--tRNA ligase alpha subunit (360 aa).

Residue E260 coordinates Mg(2+).

The protein belongs to the class-II aminoacyl-tRNA synthetase family. Phe-tRNA synthetase alpha subunit type 1 subfamily. Tetramer of two alpha and two beta subunits. The cofactor is Mg(2+).

The protein localises to the cytoplasm. The enzyme catalyses tRNA(Phe) + L-phenylalanine + ATP = L-phenylalanyl-tRNA(Phe) + AMP + diphosphate + H(+). This is Phenylalanine--tRNA ligase alpha subunit from Methylobacterium nodulans (strain LMG 21967 / CNCM I-2342 / ORS 2060).